We begin with the raw amino-acid sequence, 154 residues long: UPF0225 protein YPTB2098 (154 aa).

The protein belongs to the UPF0225 family.

The polypeptide is UPF0225 protein YPTB2098 (Yersinia pseudotuberculosis serotype I (strain IP32953)).